Consider the following 151-residue polypeptide: Histone H2A.2.1 (151 aa).

At methionine 1 the chain carries N-acetylmethionine. Disordered stretches follow at residues 1–22 and 129–151; these read MDGSKAKKVAAKKFGGPRKKSV and EKAEKAGAAPKSPKKTTKSPKKA. Short sequence motifs (SPKK motif) lie at residues 140–143 and 147–150; these read SPKK. Positions 140–151 are enriched in basic residues; it reads SPKKTTKSPKKA.

The protein belongs to the histone H2A family. As to quaternary structure, the nucleosome is a histone octamer containing two molecules each of H2A, H2B, H3 and H4 assembled in one H3-H4 heterotetramer and two H2A-H2B heterodimers. The octamer wraps approximately 147 bp of DNA. Phosphorylated within its C-terminal part, probably at the SPKK motifs.

Its subcellular location is the nucleus. The protein resides in the chromosome. In terms of biological role, core component of nucleosome. Nucleosomes wrap and compact DNA into chromatin, limiting DNA accessibility to the cellular machineries which require DNA as a template. Histones thereby play a central role in transcription regulation, DNA repair, DNA replication and chromosomal stability. DNA accessibility is regulated via a complex set of post-translational modifications of histones, also called histone code, and nucleosome remodeling. In Triticum aestivum (Wheat), this protein is Histone H2A.2.1.